The primary structure comprises 347 residues: 3-isopropylmalate dehydrogenase (347 aa).

Substrate is bound by residues arginine 94, arginine 104, arginine 128, and aspartate 219. Residues aspartate 219, aspartate 243, and aspartate 247 each contribute to the Mg(2+) site. Position 279–291 (279–291 (GSAPDIAGQGKAD)) interacts with NAD(+).

It belongs to the isocitrate and isopropylmalate dehydrogenases family. LeuB type 2 subfamily. Homodimer. Mg(2+) is required as a cofactor. The cofactor is Mn(2+).

The protein localises to the cytoplasm. It carries out the reaction (2R,3S)-3-isopropylmalate + NAD(+) = 4-methyl-2-oxopentanoate + CO2 + NADH. The protein operates within amino-acid biosynthesis; L-leucine biosynthesis; L-leucine from 3-methyl-2-oxobutanoate: step 3/4. Catalyzes the oxidation of 3-carboxy-2-hydroxy-4-methylpentanoate (3-isopropylmalate) to 3-carboxy-4-methyl-2-oxopentanoate. The product decarboxylates to 4-methyl-2 oxopentanoate. The chain is 3-isopropylmalate dehydrogenase from Streptomyces coelicolor (strain ATCC BAA-471 / A3(2) / M145).